Here is a 371-residue protein sequence, read N- to C-terminus: Histidinol-phosphate aminotransferase (371 aa).

At Lys232 the chain carries N6-(pyridoxal phosphate)lysine.

This sequence belongs to the class-II pyridoxal-phosphate-dependent aminotransferase family. Histidinol-phosphate aminotransferase subfamily. As to quaternary structure, homodimer. Requires pyridoxal 5'-phosphate as cofactor.

The catalysed reaction is L-histidinol phosphate + 2-oxoglutarate = 3-(imidazol-4-yl)-2-oxopropyl phosphate + L-glutamate. Its pathway is amino-acid biosynthesis; L-histidine biosynthesis; L-histidine from 5-phospho-alpha-D-ribose 1-diphosphate: step 7/9. This is Histidinol-phosphate aminotransferase from Methylibium petroleiphilum (strain ATCC BAA-1232 / LMG 22953 / PM1).